We begin with the raw amino-acid sequence, 273 residues long: DnaJ homolog subfamily C member 27-A (273 aa).

Residues 23-30 (GNAEVGKS), 71-75 (DMAGH), and 134-137 (NKID) each bind GTP. Positions 217–273 (DSWDMLGVKPGATRDEVNKAYRKLAVLLHPDKCMAPGSEDAFKAVVNARTALLKNIK) constitute a J domain.

This sequence belongs to the small GTPase superfamily. Rab family.

It is found in the nucleus. Its function is as follows. GTPase possibly involved in regulation of the MEK/ERK pathway. The chain is DnaJ homolog subfamily C member 27-A (dnajc27-a) from Xenopus laevis (African clawed frog).